The primary structure comprises 482 residues: tRNA sulfurtransferase (482 aa).

The THUMP domain maps to 61–165 (EAIRDALTRI…QDRLLLIKSR (105 aa)). ATP contacts are provided by residues 183–184 (LI), Lys-265, Gly-287, and Gln-296. A disulfide bridge links Cys-344 with Cys-456. One can recognise a Rhodanese domain in the interval 404–482 (FVPTDVLLDI…GFSNVKVYRP (79 aa)). Cys-456 functions as the Cysteine persulfide intermediate in the catalytic mechanism.

It belongs to the ThiI family.

It is found in the cytoplasm. The catalysed reaction is [ThiI sulfur-carrier protein]-S-sulfanyl-L-cysteine + a uridine in tRNA + 2 reduced [2Fe-2S]-[ferredoxin] + ATP + H(+) = [ThiI sulfur-carrier protein]-L-cysteine + a 4-thiouridine in tRNA + 2 oxidized [2Fe-2S]-[ferredoxin] + AMP + diphosphate. The enzyme catalyses [ThiS sulfur-carrier protein]-C-terminal Gly-Gly-AMP + S-sulfanyl-L-cysteinyl-[cysteine desulfurase] + AH2 = [ThiS sulfur-carrier protein]-C-terminal-Gly-aminoethanethioate + L-cysteinyl-[cysteine desulfurase] + A + AMP + 2 H(+). Its pathway is cofactor biosynthesis; thiamine diphosphate biosynthesis. Functionally, catalyzes the ATP-dependent transfer of a sulfur to tRNA to produce 4-thiouridine in position 8 of tRNAs, which functions as a near-UV photosensor. Also catalyzes the transfer of sulfur to the sulfur carrier protein ThiS, forming ThiS-thiocarboxylate. This is a step in the synthesis of thiazole, in the thiamine biosynthesis pathway. The sulfur is donated as persulfide by IscS. This Pectobacterium atrosepticum (strain SCRI 1043 / ATCC BAA-672) (Erwinia carotovora subsp. atroseptica) protein is tRNA sulfurtransferase.